The primary structure comprises 66 residues: Beta-mammal toxin Co2 (66 aa).

Residues 1-66 (KEGYIVNYHD…VWPLPKKRCN (66 aa)) enclose the LCN-type CS-alpha/beta domain. Disulfide bonds link Cys-12–Cys-65, Cys-16–Cys-41, Cys-25–Cys-46, and Cys-29–Cys-48.

Expressed by the venom gland.

It localises to the secreted. In terms of biological role, beta toxins bind voltage-independently at site-4 of sodium channels (Nav) and shift the voltage of activation toward more negative potentials thereby affecting sodium channel activation and promoting spontaneous and repetitive firing. This toxin acts on human Nav1.1/SCN1A, Nav1.2/SCN2A, Nav1.4/SCN4A and Nav1.6/SCN8A voltage-gated sodium channels. Also, it reduces the peak of sodium currents in Nav1.5/SCN5A at all potentials. In vivo, is lethal to mice when intraperitoneally injected at a dose of 5ug. No activity is observed when injected into crickets or woodlice. The chain is Beta-mammal toxin Co2 from Centruroides ornatus (Scorpion).